A 322-amino-acid chain; its full sequence is Transaldolase (322 aa).

Lys-136 (schiff-base intermediate with substrate) is an active-site residue.

Belongs to the transaldolase family. Type 1 subfamily. In terms of assembly, homodimer.

The protein resides in the cytoplasm. The enzyme catalyses D-sedoheptulose 7-phosphate + D-glyceraldehyde 3-phosphate = D-erythrose 4-phosphate + beta-D-fructose 6-phosphate. The protein operates within carbohydrate degradation; pentose phosphate pathway; D-glyceraldehyde 3-phosphate and beta-D-fructose 6-phosphate from D-ribose 5-phosphate and D-xylulose 5-phosphate (non-oxidative stage): step 2/3. Functionally, transaldolase is important for the balance of metabolites in the pentose-phosphate pathway. The protein is Transaldolase of Xanthomonas euvesicatoria pv. vesicatoria (strain 85-10) (Xanthomonas campestris pv. vesicatoria).